A 360-amino-acid chain; its full sequence is NAD(P)H-quinone oxidoreductase subunit 1, chloroplastic (360 aa).

The next 8 membrane-spanning stretches (helical) occupy residues 27-47 (IWIF…VLVI), 98-118 (FSIG…IIPF), 129-149 (IGIF…LMSG), 165-185 (AAQS…ISLL), 203-223 (FWGW…ISSL), 253-273 (FGLF…FVTV), 297-317 (IFGT…FLFI), and 340-360 (FLLP…LFSL).

Belongs to the complex I subunit 1 family. As to quaternary structure, NDH is composed of at least 16 different subunits, 5 of which are encoded in the nucleus.

Its subcellular location is the plastid. The protein localises to the chloroplast thylakoid membrane. It catalyses the reaction a plastoquinone + NADH + (n+1) H(+)(in) = a plastoquinol + NAD(+) + n H(+)(out). It carries out the reaction a plastoquinone + NADPH + (n+1) H(+)(in) = a plastoquinol + NADP(+) + n H(+)(out). Functionally, NDH shuttles electrons from NAD(P)H:plastoquinone, via FMN and iron-sulfur (Fe-S) centers, to quinones in the photosynthetic chain and possibly in a chloroplast respiratory chain. The immediate electron acceptor for the enzyme in this species is believed to be plastoquinone. Couples the redox reaction to proton translocation, and thus conserves the redox energy in a proton gradient. The protein is NAD(P)H-quinone oxidoreductase subunit 1, chloroplastic of Lobularia maritima (Sweet alyssum).